We begin with the raw amino-acid sequence, 110 residues long: Large ribosomal subunit protein P1B (110 aa).

The segment covering 69-85 (PAAGGAGAPAAAAGGEA) has biased composition (low complexity). The tract at residues 69–110 (PAAGGAGAPAAAAGGEAAAEEQKEEAKEEEESDEDMGFGLFD) is disordered. The segment covering 95–104 (KEEEESDEDM) has biased composition (acidic residues).

The protein belongs to the eukaryotic ribosomal protein P1/P2 family. Component of the large ribosomal subunit (LSU). Mature yeast ribosomes consist of a small (40S) and a large (60S) subunit. The 40S small subunit contains 1 molecule of ribosomal RNA (18S rRNA) and at least 33 different proteins. The large 60S subunit contains 3 rRNA molecules (25S, 5.8S and 5S rRNA) and at least 46 different proteins. The acidic ribosomal P-proteins form the stalk structure of the 60S subunit. They are organized as a pentameric complex in which uL10/P0 interacts with 2 heterodimers of P1 and P2 proteins.

It is found in the cytoplasm. Functionally, component of the ribosome, a large ribonucleoprotein complex responsible for the synthesis of proteins in the cell. The small ribosomal subunit (SSU) binds messenger RNAs (mRNAs) and translates the encoded message by selecting cognate aminoacyl-transfer RNA (tRNA) molecules. The large subunit (LSU) contains the ribosomal catalytic site termed the peptidyl transferase center (PTC), which catalyzes the formation of peptide bonds, thereby polymerizing the amino acids delivered by tRNAs into a polypeptide chain. The nascent polypeptides leave the ribosome through a tunnel in the LSU and interact with protein factors that function in enzymatic processing, targeting, and the membrane insertion of nascent chains at the exit of the ribosomal tunnel. In Schizosaccharomyces pombe (strain 972 / ATCC 24843) (Fission yeast), this protein is Large ribosomal subunit protein P1B (rpp102).